We begin with the raw amino-acid sequence, 62 residues long: Omega-lycotoxin-Am1e (62 aa).

The propeptide occupies 1–15 (EDEVEETLPVAEEGR). 4 disulfides stabilise this stretch: Cys19-Cys34, Cys26-Cys39, Cys33-Cys59, and Cys41-Cys57.

The protein belongs to the neurotoxin omega-lctx family. In terms of tissue distribution, expressed by the venom gland.

It is found in the secreted. In terms of biological role, modulates Cav2.1/CACNA1A voltage-gated calcium channels (P/Q-type currents) in rat cerebellar Purkinje cells and hippocampal CA1-CA3 neurons. At saturating concentrations (&gt;10 nM) decelerates activation kinetics and slightly increases peak amplitude without affecting deactivation kinetics. In vivo, does not cause death when intravenously injected into mice. In rat models, through its activity on Cav2.1/CACNA1A, has an ameliorative effect on memory defects provoked by hyperstimulation of N-methyl-D-aspartate receptors (NMDARs) in the hippocampus. This is Omega-lycotoxin-Am1e from Alopecosa marikovskyi (Wolf spider).